A 256-amino-acid chain; its full sequence is MLRRIHDKKPLIHHLTNTVTINDCANMTLALGGSPVMAEDLLEVEEMVGLADAVVINTGTINPDMRKAQLLAGKTANRLGKPVILDPVGAGATTLRTDFMKQLMEEITFTVIKGNASEIKTLLGQAARTKGVDVAEGESLDLQSVHAFASQTKQVIVVTGPVDFVTDGVRQHHLDVGTKRLGQVTGTGCMTASLIATFLGAGYGRFDAAVFGTYAMGKAGETAGNRPGIGSFRTGLFDAVSLMTEESLPEVQMNGQ.

Methionine 37 contributes to the substrate binding site. ATP-binding residues include lysine 113 and threonine 159. A substrate-binding site is contributed by glycine 186.

The protein belongs to the Thz kinase family. The cofactor is Mg(2+).

It catalyses the reaction 5-(2-hydroxyethyl)-4-methylthiazole + ATP = 4-methyl-5-(2-phosphooxyethyl)-thiazole + ADP + H(+). It functions in the pathway cofactor biosynthesis; thiamine diphosphate biosynthesis; 4-methyl-5-(2-phosphoethyl)-thiazole from 5-(2-hydroxyethyl)-4-methylthiazole: step 1/1. In terms of biological role, catalyzes the phosphorylation of the hydroxyl group of 4-methyl-5-beta-hydroxyethylthiazole (THZ). The protein is Hydroxyethylthiazole kinase of Exiguobacterium sibiricum (strain DSM 17290 / CCUG 55495 / CIP 109462 / JCM 13490 / 255-15).